Here is a 484-residue protein sequence, read N- to C-terminus: MAKTLAEKVWDAHVVRKGDGAGANAQPDLLFIDLHLVHEVTSPQAFEGLRLAGRPLRRPDLTIATEDHNTPTLDIDKPIADLTSRTQIQTLRNNCAEFGVRLHSLGDAEQGIVHVVGPQLGLTQPGMTVVCGDSHTSTHGAFGALAMGIGTSEVEHVMATQTLSLKPFKTMAINVEGTLRPGVTAKDIILAVIAKIGTGGGQGYVLEYRGSAIRALSMDARMTICNMSIEAGARAGMVAPDETTYAYMQGRPHAPEGADWDAAVEYWNTLKTDDDATFDVEVDLDADTLEPFVTWGTNPGQGVSLSQAVPSPEDFGDENAKAAAERALQYMGLEAGTPMKDIRVDTVFLGSCTNSRIEDLRAAADIIRGREKDPKVRMLVVPGSARVRLEAEAEGLDRVFKDFGAEWRFAGCSMCLGMNPDQLEPGERCASTSNRNFEGRQGKGGRTHLVSPVVAAATAVRGTLSSPSDLDPAPASAAIRTDAA.

[4Fe-4S] cluster is bound by residues cysteine 352, cysteine 412, and cysteine 415. Residues 463 to 484 (TLSSPSDLDPAPASAAIRTDAA) are disordered. Residues 464–478 (LSSPSDLDPAPASAA) show a composition bias toward low complexity.

It belongs to the aconitase/IPM isomerase family. LeuC type 1 subfamily. As to quaternary structure, heterodimer of LeuC and LeuD. It depends on [4Fe-4S] cluster as a cofactor.

The catalysed reaction is (2R,3S)-3-isopropylmalate = (2S)-2-isopropylmalate. It participates in amino-acid biosynthesis; L-leucine biosynthesis; L-leucine from 3-methyl-2-oxobutanoate: step 2/4. Functionally, catalyzes the isomerization between 2-isopropylmalate and 3-isopropylmalate, via the formation of 2-isopropylmaleate. This is 3-isopropylmalate dehydratase large subunit from Pseudarthrobacter chlorophenolicus (strain ATCC 700700 / DSM 12829 / CIP 107037 / JCM 12360 / KCTC 9906 / NCIMB 13794 / A6) (Arthrobacter chlorophenolicus).